Reading from the N-terminus, the 401-residue chain is Argininosuccinate synthase (401 aa).

Residues 9 to 17 (AFSGGLDTS) and alanine 35 contribute to the ATP site. Residues tyrosine 88 and serine 93 each contribute to the L-citrulline site. Residue glycine 117 coordinates ATP. L-aspartate-binding residues include threonine 119, asparagine 123, and aspartate 124. Residue asparagine 123 participates in L-citrulline binding. Residues arginine 127 and tyrosine 273 each coordinate L-citrulline.

Belongs to the argininosuccinate synthase family. Type 1 subfamily. As to quaternary structure, homotetramer.

It localises to the cytoplasm. It catalyses the reaction L-citrulline + L-aspartate + ATP = 2-(N(omega)-L-arginino)succinate + AMP + diphosphate + H(+). It participates in amino-acid biosynthesis; L-arginine biosynthesis; L-arginine from L-ornithine and carbamoyl phosphate: step 2/3. This Xylella fastidiosa (strain Temecula1 / ATCC 700964) protein is Argininosuccinate synthase.